The sequence spans 214 residues: UPF0301 protein blr1492 (214 aa).

Residues 1 to 22 (MAPTGKRTGESTRSTGPAPPSS) form a disordered region.

The protein belongs to the UPF0301 (AlgH) family.

The protein is UPF0301 protein blr1492 of Bradyrhizobium diazoefficiens (strain JCM 10833 / BCRC 13528 / IAM 13628 / NBRC 14792 / USDA 110).